We begin with the raw amino-acid sequence, 351 residues long: Porphobilinogen deaminase (351 aa).

S-(dipyrrolylmethanemethyl)cysteine is present on Cys242.

This sequence belongs to the HMBS family. In terms of assembly, monomer. It depends on dipyrromethane as a cofactor.

The catalysed reaction is 4 porphobilinogen + H2O = hydroxymethylbilane + 4 NH4(+). It functions in the pathway porphyrin-containing compound metabolism; protoporphyrin-IX biosynthesis; coproporphyrinogen-III from 5-aminolevulinate: step 2/4. Tetrapolymerization of the monopyrrole PBG into the hydroxymethylbilane pre-uroporphyrinogen in several discrete steps. The protein is Porphobilinogen deaminase of Rickettsia rickettsii (strain Sheila Smith).